Reading from the N-terminus, the 64-residue chain is Cytochrome c oxidase subunit 5C (64 aa).

A helical transmembrane segment spans residues 16 to 34 (VVKELVIGFSLGLVAGGFW).

Belongs to the cytochrome c oxidase subunit 5C family. In terms of assembly, sweet potato cytochrome C oxidase consists of at least seven different polypeptides species, subunits I, II, III, IV, Va, Vb, and Vc in order of MW.

Its subcellular location is the mitochondrion inner membrane. Functionally, this protein is one of the nuclear-coded polypeptide chains of cytochrome c oxidase, the terminal oxidase in mitochondrial electron transport. The protein is Cytochrome c oxidase subunit 5C (COX5C) of Ipomoea batatas (Sweet potato).